We begin with the raw amino-acid sequence, 155 residues long: Small ribosomal subunit protein uS7cz/uS7cy (155 aa).

The protein belongs to the universal ribosomal protein uS7 family. As to quaternary structure, part of the 30S ribosomal subunit.

It localises to the plastid. It is found in the chloroplast. In terms of biological role, one of the primary rRNA binding proteins, it binds directly to 16S rRNA where it nucleates assembly of the head domain of the 30S subunit. This Daucus carota (Wild carrot) protein is Small ribosomal subunit protein uS7cz/uS7cy (rps7-A).